The following is a 242-amino-acid chain: E3 ubiquitin-protein ligase AIRP2 (242 aa).

The RING-type zinc finger occupies 146 to 184 (CGICLEIRNKVVLPTCNHSMCINCYRNWRARSQSCPFCR).

Interacts with ATP1/SDIRIP1. As to expression, expressed in germinating seeds, flower organs and siliques.

It is found in the cytoplasm. Its subcellular location is the cytosol. It catalyses the reaction S-ubiquitinyl-[E2 ubiquitin-conjugating enzyme]-L-cysteine + [acceptor protein]-L-lysine = [E2 ubiquitin-conjugating enzyme]-L-cysteine + N(6)-ubiquitinyl-[acceptor protein]-L-lysine.. Functionally, possesses E3 ubiquitin-protein ligase activity in vitro when associated with the E2 enzyme UBC8 in vitro. Plays combinatory roles with AIRP1 in the positive regulation of the abscisic acid-mediated drought stress response. Plays a positive role in abscisic acid- and high salinity-regulated seed germination through the ubiquitin-proteasome-dependent down-regulation of ATP1/SDIRIP1. This Arabidopsis thaliana (Mouse-ear cress) protein is E3 ubiquitin-protein ligase AIRP2.